Consider the following 154-residue polypeptide: Large ribosomal subunit protein uL30 (154 aa).

It belongs to the universal ribosomal protein uL30 family. In terms of assembly, part of the 50S ribosomal subunit.

The protein is Large ribosomal subunit protein uL30 of Methanocaldococcus jannaschii (strain ATCC 43067 / DSM 2661 / JAL-1 / JCM 10045 / NBRC 100440) (Methanococcus jannaschii).